The sequence spans 714 residues: Polyribonucleotide nucleotidyltransferase (714 aa).

Residues Asp-487 and Asp-493 each contribute to the Mg(2+) site. The KH domain maps to 554–613; the sequence is PRIEVMTIPVDKIREVIGSGGKVIREIVEKTGAKINIEDDGTIKIASASGKEIEAARKWI. An S1 motif domain is found at 623 to 691; it reads GVVYEGTVVK…ERGKVRLSMK (69 aa).

This sequence belongs to the polyribonucleotide nucleotidyltransferase family. Requires Mg(2+) as cofactor.

Its subcellular location is the cytoplasm. It catalyses the reaction RNA(n+1) + phosphate = RNA(n) + a ribonucleoside 5'-diphosphate. Its function is as follows. Involved in mRNA degradation. Catalyzes the phosphorolysis of single-stranded polyribonucleotides processively in the 3'- to 5'-direction. In Allorhizobium ampelinum (strain ATCC BAA-846 / DSM 112012 / S4) (Agrobacterium vitis (strain S4)), this protein is Polyribonucleotide nucleotidyltransferase.